The following is a 716-amino-acid chain: MPQLSKSLSFDGRDIRLELGLFAPQAGGSVLISSGDTAVLVAATRSTAREGIDFLPLTVDYEERMYAAGRIPGGFLRREGRPPERATLTSRLIDRPLRPLFPSWLRDDLQVVATTLSMDETVPPDVLAATGASIATLVAKIPFYGPMAAVRVGLVGDDFIINPTYREIEKGDLDLVVAGTPAGVIMVEAGANQLPEADVIEAIDFGYEAVQELIKAQQSLLAELGIEQILPEAPNADNTLENFVRDRASSGVQQVLQHFSFTKSERDAALDEVKASVVEAIAALPEEDPVRSVTAAEPKALGNTFKALTKTLMRQQILRDGVRVDGRKLDQVRPISSQVGLLPPRVHGSGLFQRGLTQVLSIATLGTPGDAQELDDLHPDTQKRYLHHYNMPPYSVGETRPMRSPGRREIGHGALAERALLPVLPSKEEFPYVIRVVSEVLSSNGSTSMGSVCGSTLALMDAGVPIKKPVSGAAMGLIREGDEYRVLTDIQGIEDFLGDMDFKVAGTDQGITALQMDMKIHGLPLEIIADAINQAKPARLHILNKMLEAIATPRADLSTYAPRLFRIQINPEQIGLVIGPGGKTIRSITEQTGAKIDIEDTGAVTISAVDADSALRAKSIIEGMTRTITAGDVYIGKVTRIIPIGAFVEFLPGKEGMIHISQIADYRVARVEDELTVGDEVVVKVREIDQKGRVNLTRKGIDPEEVSAARAAVEAS.

The Mg(2+) site is built by D495 and D501. The KH domain maps to P562 to I621. Positions G631–K699 constitute an S1 motif domain.

It belongs to the polyribonucleotide nucleotidyltransferase family. Requires Mg(2+) as cofactor.

The protein resides in the cytoplasm. The enzyme catalyses RNA(n+1) + phosphate = RNA(n) + a ribonucleoside 5'-diphosphate. In terms of biological role, involved in mRNA degradation. Catalyzes the phosphorolysis of single-stranded polyribonucleotides processively in the 3'- to 5'-direction. The polypeptide is Polyribonucleotide nucleotidyltransferase (Synechococcus sp. (strain ATCC 27144 / PCC 6301 / SAUG 1402/1) (Anacystis nidulans)).